Consider the following 189-residue polypeptide: MRIYHSNNFRSGRKIIFENEPCLIESSEFVKPGKGQSFVRVKLRKLLTKQLIEKTFKSTDSLEIADIIEYTLSYLYNDGRFWYFINNNTFEELSVDEKIIGVHKKWLLEQDTCIVTLWNNQPISITPNNFVNLKVIHVQATLKGDTINTSSTKLATLSTGAIVRVPLFIQVGSLIKVDTRSGEYVSRIK.

Lys34 carries the post-translational modification N6-(3,6-diaminohexanoyl)-5-hydroxylysine.

It belongs to the elongation factor P family. May be beta-lysylated on the epsilon-amino group of Lys-34 by the combined action of EpmA and EpmB, and then hydroxylated on the C5 position of the same residue by EpmC (if this protein is present). Lysylation is critical for the stimulatory effect of EF-P on peptide-bond formation. The lysylation moiety may extend toward the peptidyltransferase center and stabilize the terminal 3-CCA end of the tRNA. Hydroxylation of the C5 position on Lys-34 may allow additional potential stabilizing hydrogen-bond interactions with the P-tRNA.

The protein resides in the cytoplasm. The protein operates within protein biosynthesis; polypeptide chain elongation. Functionally, involved in peptide bond synthesis. Alleviates ribosome stalling that occurs when 3 or more consecutive Pro residues or the sequence PPG is present in a protein, possibly by augmenting the peptidyl transferase activity of the ribosome. Modification of Lys-34 is required for alleviation. The chain is Elongation factor P from Buchnera aphidicola subsp. Acyrthosiphon pisum (strain APS) (Acyrthosiphon pisum symbiotic bacterium).